We begin with the raw amino-acid sequence, 347 residues long: Dolichyl-diphosphooligosaccharide--protein glycosyltransferase subunit TUSC3 (347 aa).

The N-terminal stretch at 1–41 (MGARGAPSRRRQAGRRPRYLPTGSFPFLLLLLLLCIQLGGG) is a signal peptide. The Lumenal segment spans residues 42-196 (QKKKENLLAE…DVHIRVFRPP (155 aa)). Residues 59–187 (WSSRRSVFRM…LAKWIADRTD (129 aa)) form the Thioredoxin domain. A glycan (N-linked (GlcNAc...) asparagine) is linked at Asn-83. A disulfide bond links Cys-99 and Cys-102. The chain crosses the membrane as a helical span at residues 197–217 (NYSGTIALALLVSLVGGLLYL). The Cytoplasmic portion of the chain corresponds to 218–221 (RRNN). The chain crosses the membrane as a helical span at residues 222–242 (LEFIYNKTGWAMVSLCIVFAM). Residues 243–276 (TSGQMWNHIRGPPYAHKNPHNGQVSYIHGSSQVQ) lie on the Lumenal side of the membrane. Residues 277–297 (FVAESHIILVLNAAITMGMDL) traverse the membrane as a helical segment. Residues 298-312 (LNEAATSKGDVGKRR) are Cytoplasmic-facing. A helical transmembrane segment spans residues 313 to 333 (IICLVGLGLVVFFFSFLLSIF). The Lumenal portion of the chain corresponds to 334–347 (RSKYHGYPYSFLIK).

Belongs to the OST3/OST6 family. Accessory component of the STT3B-containing form of the oligosaccharyltransferase (OST) complex. OST exists in two different complex forms which contain common core subunits RPN1, RPN2, OST48, OST4, DAD1 and TMEM258, either STT3A or STT3B as catalytic subunits, and form-specific accessory subunits. OST can form stable complexes with the Sec61 complex or with both the Sec61 and TRAP complexes. The association of TUSC3 or MAGT1 with the STT3B-containing complex seems to be mutually exclusvice.

The protein localises to the endoplasmic reticulum membrane. It functions in the pathway protein modification; protein glycosylation. Its function is as follows. Acts as accessory component of the N-oligosaccharyl transferase (OST) complex which catalyzes the transfer of a high mannose oligosaccharide from a lipid-linked oligosaccharide donor to an asparagine residue within an Asn-X-Ser/Thr consensus motif in nascent polypeptide chains. Involved in N-glycosylation of STT3B-dependent substrates. Specifically required for the glycosylation of a subset of acceptor sites that are near cysteine residues; in this function seems to act redundantly with MAGT1. In its oxidized form proposed to form transient mixed disulfides with a glycoprotein substrate to facilitate access of STT3B to the unmodified acceptor site. Also has oxidoreductase-independent functions in the STT3B-containing OST complex possibly involving substrate recognition. Could indirectly play a role in Mg(2+) transport. The sequence is that of Dolichyl-diphosphooligosaccharide--protein glycosyltransferase subunit TUSC3 (TUSC3) from Bos taurus (Bovine).